We begin with the raw amino-acid sequence, 106 residues long: Pyrimidine/purine nucleoside phosphorylase (106 aa).

The protein belongs to the nucleoside phosphorylase PpnP family.

The enzyme catalyses a purine D-ribonucleoside + phosphate = a purine nucleobase + alpha-D-ribose 1-phosphate. The catalysed reaction is adenosine + phosphate = alpha-D-ribose 1-phosphate + adenine. It catalyses the reaction cytidine + phosphate = cytosine + alpha-D-ribose 1-phosphate. It carries out the reaction guanosine + phosphate = alpha-D-ribose 1-phosphate + guanine. The enzyme catalyses inosine + phosphate = alpha-D-ribose 1-phosphate + hypoxanthine. The catalysed reaction is thymidine + phosphate = 2-deoxy-alpha-D-ribose 1-phosphate + thymine. It catalyses the reaction uridine + phosphate = alpha-D-ribose 1-phosphate + uracil. It carries out the reaction xanthosine + phosphate = alpha-D-ribose 1-phosphate + xanthine. Its function is as follows. Catalyzes the phosphorolysis of diverse nucleosides, yielding D-ribose 1-phosphate and the respective free bases. Can use uridine, adenosine, guanosine, cytidine, thymidine, inosine and xanthosine as substrates. Also catalyzes the reverse reactions. This chain is Pyrimidine/purine nucleoside phosphorylase, found in Burkholderia multivorans (strain ATCC 17616 / 249).